The chain runs to 323 residues: Breast cancer metastasis-suppressor 1-like protein (323 aa).

Over residues 1-17 (MPVHSRGDKKETNHHDE) the composition is skewed to basic and acidic residues. Positions 1–56 (MPVHSRGDKKETNHHDEMEVDYAENEGSSSEDEDTESSSVSEDGDSSEMDDEDCER) are disordered. Over residues 18-53 (MEVDYAENEGSSSEDEDTESSSVSEDGDSSEMDDED) the composition is skewed to acidic residues. Coiled-coil stretches lie at residues 52 to 84 (EDCE…KERL) and 149 to 180 (EKLL…ITSE). Residue serine 197 is modified to Phosphoserine. Glycyl lysine isopeptide (Lys-Gly) (interchain with G-Cter in SUMO2) cross-links involve residues lysine 240 and lysine 246.

Belongs to the BRMS1 family. In terms of assembly, component of the Sin3/HDAC1 corepressor complex at least composed of BRMS1, BRMS1L and ING2/ING1L. Interacts with HDAC and SIN3A.

It is found in the nucleus. Involved in the histone deacetylase (HDAC1)-dependent transcriptional repression activity. When overexpressed in lung cancer cell line that lacks p53/TP53 expression, inhibits cell growth. This Bos taurus (Bovine) protein is Breast cancer metastasis-suppressor 1-like protein (BRMS1L).